Consider the following 311-residue polypeptide: tRNA dimethylallyltransferase (311 aa).

11–18 is a binding site for ATP; it reads GPTASGKS. 13–18 contacts substrate; it reads TASGKS. Interaction with substrate tRNA regions lie at residues 36–39 and 160–164; these read DSMQ and QRLIR.

It belongs to the IPP transferase family. Monomer. It depends on Mg(2+) as a cofactor.

The catalysed reaction is adenosine(37) in tRNA + dimethylallyl diphosphate = N(6)-dimethylallyladenosine(37) in tRNA + diphosphate. In terms of biological role, catalyzes the transfer of a dimethylallyl group onto the adenine at position 37 in tRNAs that read codons beginning with uridine, leading to the formation of N6-(dimethylallyl)adenosine (i(6)A). This chain is tRNA dimethylallyltransferase, found in Rickettsia prowazekii (strain Madrid E).